The primary structure comprises 179 residues: MTMEKQVPIVTFRTRVRDESISGPNPYRWEDKTTDDYFSGKRVILFSLPGAFTPICSTFQLPDFESLYVEFKKNGIDDIYCLSVNDAFVMNAWGKSQGLKNVKLIPDGSGEFTRKMGMLVAKDNLGFGLRSWRYAAVINNGVVEGWFEEEGFGDNCATDPYGVSSPQNILKCLKAPAFV.

One can recognise a Thioredoxin domain in the interval 2–152 (TMEKQVPIVT…VEGWFEEEGF (151 aa)). The active-site Cysteine sulfenic acid (-SOH) intermediate (for peroxiredoxin activity) is the Cys56.

The protein belongs to the peroxiredoxin family. Prx5 subfamily. As to quaternary structure, monomer.

It carries out the reaction a hydroperoxide + 2 glutathione = an alcohol + glutathione disulfide + H2O. Thiol-specific peroxidase that catalyzes the reduction of hydrogen peroxide and organic hydroperoxides to water and alcohols, respectively. Plays a role in cell protection against oxidative stress by detoxifying peroxides. In Rhizobium etli, this protein is Peroxiredoxin.